Reading from the N-terminus, the 333-residue chain is DNA-directed RNA polymerase subunit alpha (333 aa).

Positions 1–227 (MRKIKVAPFM…VMNKQLSVFN (227 aa)) are alpha N-terminal domain (alpha-NTD). The interval 247 to 333 (ELKPFLAAVD…LVKKLEQLKA (87 aa)) is alpha C-terminal domain (alpha-CTD).

Belongs to the RNA polymerase alpha chain family. As to quaternary structure, homodimer. The RNAP catalytic core consists of 2 alpha, 1 beta, 1 beta' and 1 omega subunit. When a sigma factor is associated with the core the holoenzyme is formed, which can initiate transcription.

The enzyme catalyses RNA(n) + a ribonucleoside 5'-triphosphate = RNA(n+1) + diphosphate. DNA-dependent RNA polymerase catalyzes the transcription of DNA into RNA using the four ribonucleoside triphosphates as substrates. In Sulfurovum sp. (strain NBC37-1), this protein is DNA-directed RNA polymerase subunit alpha.